A 244-amino-acid chain; its full sequence is Carbonic anhydrase (244 aa).

The N-terminal stretch at 1 to 19 (MKGKLSIALMLSVCFSASA) is a signal peptide. The Alpha-carbonic anhydrase domain occupies 23–244 (VHWGYEGNGD…QPLNGRIIIH (222 aa)). A disulfide bond links Cys46 and Cys199. The active-site Proton acceptor is the His84. Zn(2+) is bound by residues His109, His111, and His128. A substrate-binding site is contributed by 195-196 (TT).

This sequence belongs to the alpha-carbonic anhydrase family. Requires Zn(2+) as cofactor.

The protein localises to the periplasm. It catalyses the reaction hydrogencarbonate + H(+) = CO2 + H2O. Functionally, reversible hydration of carbon dioxide. The protein is Carbonic anhydrase (cah) of Pectobacterium carotovorum (Erwinia carotovora).